A 382-amino-acid chain; its full sequence is Succinyl-diaminopimelate desuccinylase (382 aa).

H73 serves as a coordination point for Zn(2+). Residue D75 is part of the active site. D106 is a Zn(2+) binding site. E140 acts as the Proton acceptor in catalysis. Zn(2+) is bound by residues E141, E169, and H355.

The protein belongs to the peptidase M20A family. DapE subfamily. Homodimer. Zn(2+) serves as cofactor. It depends on Co(2+) as a cofactor.

It carries out the reaction N-succinyl-(2S,6S)-2,6-diaminopimelate + H2O = (2S,6S)-2,6-diaminopimelate + succinate. The protein operates within amino-acid biosynthesis; L-lysine biosynthesis via DAP pathway; LL-2,6-diaminopimelate from (S)-tetrahydrodipicolinate (succinylase route): step 3/3. Functionally, catalyzes the hydrolysis of N-succinyl-L,L-diaminopimelic acid (SDAP), forming succinate and LL-2,6-diaminopimelate (DAP), an intermediate involved in the bacterial biosynthesis of lysine and meso-diaminopimelic acid, an essential component of bacterial cell walls. The polypeptide is Succinyl-diaminopimelate desuccinylase (Cellvibrio japonicus (strain Ueda107) (Pseudomonas fluorescens subsp. cellulosa)).